The chain runs to 324 residues: Probable carboxylesterase 9 (324 aa).

Residues 86-88 (HGS) carry the Involved in the stabilization of the negatively charged intermediate by the formation of the oxyanion hole motif. Residues serine 171, aspartate 272, and histidine 302 contribute to the active site.

It belongs to the 'GDXG' lipolytic enzyme family. As to expression, expressed in flowers.

The catalysed reaction is a carboxylic ester + H2O = an alcohol + a carboxylate + H(+). Functionally, carboxylesterase acting on esters with varying acyl chain length. In Arabidopsis thaliana (Mouse-ear cress), this protein is Probable carboxylesterase 9 (CXE9).